Consider the following 331-residue polypeptide: Phosphate acyltransferase (331 aa).

This sequence belongs to the PlsX family. Homodimer. Probably interacts with PlsY.

It is found in the cytoplasm. The catalysed reaction is a fatty acyl-[ACP] + phosphate = an acyl phosphate + holo-[ACP]. The protein operates within lipid metabolism; phospholipid metabolism. Catalyzes the reversible formation of acyl-phosphate (acyl-PO(4)) from acyl-[acyl-carrier-protein] (acyl-ACP). This enzyme utilizes acyl-ACP as fatty acyl donor, but not acyl-CoA. In Lactococcus lactis subsp. lactis (strain IL1403) (Streptococcus lactis), this protein is Phosphate acyltransferase.